The chain runs to 462 residues: Lysophospholipid acyltransferase 1 (462 aa).

The next 9 membrane-spanning stretches (helical) occupy residues 9 to 29, 52 to 72, 84 to 104, 158 to 178, 211 to 231, 263 to 283, 353 to 373, 396 to 416, and 431 to 451; these read SIGV…TIPV, FLSY…PMTI, CGII…VFYM, SLIE…GPVY, AILQ…QYPL, YFIW…FSGW, AVWH…ALMI, IMVF…AVGF, and VYYI…VVPA. The active site involves H356.

It belongs to the membrane-bound acyltransferase family. As to expression, expressed in roots, rosette leaves, petals, stigma, chalazal endosperm of developing seeds and vascular bundles of siliques.

It is found in the endoplasmic reticulum membrane. The enzyme catalyses a 1-acyl-sn-glycero-3-phosphocholine + an acyl-CoA = a 1,2-diacyl-sn-glycero-3-phosphocholine + CoA. It carries out the reaction 1-(9Z-octadecenoyl)-sn-glycero-3-phosphocholine + (9Z)-octadecenoyl-CoA = 1,2-di-(9Z-octadecenoyl)-sn-glycero-3-phosphocholine + CoA. The catalysed reaction is 1-(9Z-octadecenoyl)-sn-glycero-3-phosphocholine + (9Z,12Z)-octadecadienoyl-CoA = 1-(9Z)-octadecenoyl-2-(9Z,12Z)-octadecadienoyl-sn-glycero-3-phosphocholine + CoA. It catalyses the reaction (9Z,12Z,15Z)-octadecatrienoyl-CoA + 1-(9Z-octadecenoyl)-sn-glycero-3-phosphocholine = 1-(9Z-octadecaenoyl)-2-(9Z,12Z,15Z-octadecatrienoyl)-sn-glycero-3-phosphocholine + CoA. The enzyme catalyses a 1-acyl-sn-glycero-3-phosphoethanolamine + an acyl-CoA = a 1,2-diacyl-sn-glycero-3-phosphoethanolamine + CoA. It carries out the reaction a 1-acyl-sn-glycero-3-phospho-L-serine + an acyl-CoA = a 1,2-diacyl-sn-glycero-3-phospho-L-serine + CoA. Its function is as follows. Lysophospholipid acyltransferase with broad specificity. Mediates the conversion of lysophosphatidylethanolamine (1-acyl-sn-glycero-3-phosphoethanolamine or LPE) into phosphatidylethanolamine (1,2-diacyl-sn-glycero-3-phosphoethanolamine or PE) (LPEAT activity). Catalyzes the acylation of lysophosphatidylserine (1-acyl-2-hydroxy-sn-glycero-3-phospho-L-serine or LPS) into phosphatidylserine (1,2-diacyl-sn-glycero-3-phospho-L-serine or PS) (LPSAT activity). Can convert lysophosphatidylcholine (1-acyl-sn-glycero-3-phosphocholine or LPC) into phosphatidylcholine (1,2-diacyl-sn-glycero-3-phosphocholine or PC) (LPCAT activity). Exhibits preference for C18-unsaturated acyl-CoA when transferring an acyl group to lysophosphatidylcholine. Can also utilize lysophosphatidylglycerol (LPG) as substrate in vitro. Has neither activity towards lysophosphatidic acid (LPA) nor lysophosphatidylinositol (LPI). Lysophospholipid acyltransferases catalyze the reacylation step of the phospholipid remodeling pathway also known as the Lands cycle. The primary function of the Lands cycle is to provide a route for acyl remodeling to modify fatty acid (FA) composition of phospholipids derived from the Kennedy pathway. Is involved in PC acyl editing and phosphocholine headgroup exchange between PC and diacylglycerols. This processes control the majority of acyl fluxes through PC to provide polyunsaturated fatty acids for triacylglycerols synthesis in seeds. Involved with LPCAT2 in the direct incorporation of newly synthesized fatty acids exported form the chloroplast into PC through acyl editing. In Arabidopsis thaliana (Mouse-ear cress), this protein is Lysophospholipid acyltransferase 1.